The chain runs to 382 residues: 3-dehydroquinate synthase (382 aa).

NAD(+) is bound by residues 81–86 (EGEGSK), 115–119 (GVVGD), 139–140 (TS), Lys-152, and Lys-161. Zn(2+)-binding residues include Glu-194, His-256, and His-274.

Belongs to the sugar phosphate cyclases superfamily. Dehydroquinate synthase family. It depends on Co(2+) as a cofactor. Requires Zn(2+) as cofactor. NAD(+) is required as a cofactor.

Its subcellular location is the cytoplasm. The enzyme catalyses 7-phospho-2-dehydro-3-deoxy-D-arabino-heptonate = 3-dehydroquinate + phosphate. Its pathway is metabolic intermediate biosynthesis; chorismate biosynthesis; chorismate from D-erythrose 4-phosphate and phosphoenolpyruvate: step 2/7. Its function is as follows. Catalyzes the conversion of 3-deoxy-D-arabino-heptulosonate 7-phosphate (DAHP) to dehydroquinate (DHQ). This Bradyrhizobium sp. (strain BTAi1 / ATCC BAA-1182) protein is 3-dehydroquinate synthase.